Consider the following 556-residue polypeptide: MSVSAFNRRWAAVILEALTRHGVRHICIAPGSRSTPLTLAAAENSAFIHHTHFDERGLGHLALGLAKVSKQPVAMIVTSGTAVANLYPALIEAGLTGEKLILLTADRPPELIDCGANQAIRQPGMFASHPTHSISLPRPTQDIPARWLVSTIDHALGTLHAGGVHINCPFAEPLYGEMDDTGLSWQQRLGDWWQDDKPWLREAPRLESEKQRDWFFWRQKRGVVVAGRMSAEEGKKVALWAQTLGWPLIGDVLSQTGQPLPCADLWLGNAKATSELQQAQIVVQLGSSLTGKRLLQWQASCEPEEYWIVDDIEGRLDPAHHRGRRLIANIADWLELHPAEKRQPWCVEIPRLAEQAMQAVIARRDAFGEAQLAHRICDYLPEQGQLFVGNSLVVRLIDALSQLPAGYPVYSNRGASGIDGLLSTAAGVQRASGKPTLAIVGDLSALYDLNALALLRQVSAPLVLIVVNNNGGQIFSLLPTPQSERERFYLMPQNVHFEHAAAMFELKYHRPQNWQELETAFADAWRTPTTTVIEMVVNDTDGAQTLQQLLAQVSHL.

This sequence belongs to the TPP enzyme family. MenD subfamily. Homodimer. It depends on Mg(2+) as a cofactor. The cofactor is Mn(2+). Thiamine diphosphate is required as a cofactor.

The enzyme catalyses isochorismate + 2-oxoglutarate + H(+) = 5-enolpyruvoyl-6-hydroxy-2-succinyl-cyclohex-3-ene-1-carboxylate + CO2. The protein operates within quinol/quinone metabolism; 1,4-dihydroxy-2-naphthoate biosynthesis; 1,4-dihydroxy-2-naphthoate from chorismate: step 2/7. It participates in quinol/quinone metabolism; menaquinone biosynthesis. Its function is as follows. Catalyzes the thiamine diphosphate-dependent decarboxylation of 2-oxoglutarate and the subsequent addition of the resulting succinic semialdehyde-thiamine pyrophosphate anion to isochorismate to yield 2-succinyl-5-enolpyruvyl-6-hydroxy-3-cyclohexene-1-carboxylate (SEPHCHC). The sequence is that of 2-succinyl-5-enolpyruvyl-6-hydroxy-3-cyclohexene-1-carboxylate synthase from Escherichia coli (strain ATCC 8739 / DSM 1576 / NBRC 3972 / NCIMB 8545 / WDCM 00012 / Crooks).